We begin with the raw amino-acid sequence, 244 residues long: tRNA (guanine-N(1)-)-methyltransferase (244 aa).

S-adenosyl-L-methionine-binding positions include Gly-113 and 133 to 138 (IGDFVL).

This sequence belongs to the RNA methyltransferase TrmD family. In terms of assembly, homodimer.

The protein resides in the cytoplasm. It catalyses the reaction guanosine(37) in tRNA + S-adenosyl-L-methionine = N(1)-methylguanosine(37) in tRNA + S-adenosyl-L-homocysteine + H(+). Its function is as follows. Specifically methylates guanosine-37 in various tRNAs. In Bacillus pumilus (strain SAFR-032), this protein is tRNA (guanine-N(1)-)-methyltransferase.